A 343-amino-acid chain; its full sequence is Tetraacyldisaccharide 4'-kinase (343 aa).

Position 65-72 (H65–T72) interacts with ATP.

This sequence belongs to the LpxK family.

It carries out the reaction a lipid A disaccharide + ATP = a lipid IVA + ADP + H(+). It participates in glycolipid biosynthesis; lipid IV(A) biosynthesis; lipid IV(A) from (3R)-3-hydroxytetradecanoyl-[acyl-carrier-protein] and UDP-N-acetyl-alpha-D-glucosamine: step 6/6. Its function is as follows. Transfers the gamma-phosphate of ATP to the 4'-position of a tetraacyldisaccharide 1-phosphate intermediate (termed DS-1-P) to form tetraacyldisaccharide 1,4'-bis-phosphate (lipid IVA). The sequence is that of Tetraacyldisaccharide 4'-kinase from Neisseria gonorrhoeae (strain ATCC 700825 / FA 1090).